We begin with the raw amino-acid sequence, 218 residues long: Thymidylate kinase (218 aa).

15–22 provides a ligand contact to ATP; sequence GLDRSGKS.

It belongs to the thymidylate kinase family.

It catalyses the reaction dTMP + ATP = dTDP + ADP. It participates in pyrimidine metabolism; dTTP biosynthesis. Functionally, catalyzes the conversion of dTMP to dTDP. The chain is Thymidylate kinase from Caenorhabditis elegans.